The primary structure comprises 820 residues: 1,4-alpha-glucan-branching enzyme, chloroplastic/amyloplastic (820 aa).

Residues 1 to 20 (MLCLTSSSSSAPAPLLPSLA) are compositionally biased toward low complexity. The interval 1–28 (MLCLTSSSSSAPAPLLPSLADRPSPGIA) is disordered. Residues 1–64 (MLCLTSSSSS…SVPATARKNK (64 aa)) constitute a chloroplast transit peptide. 2 residues coordinate (1,4-alpha-D-glucosyl)n: Trp-153 and Lys-188. Residue Asp-409 is the Nucleophile of the active site. Glu-464 functions as the Proton donor in the catalytic mechanism.

The protein belongs to the glycosyl hydrolase 13 family. GlgB subfamily. As to quaternary structure, monomer.

The protein resides in the plastid. It localises to the chloroplast. The protein localises to the amyloplast. It carries out the reaction Transfers a segment of a (1-&gt;4)-alpha-D-glucan chain to a primary hydroxy group in a similar glucan chain.. The protein operates within glycan biosynthesis; starch biosynthesis. Functionally, catalyzes the formation of the alpha-1,6-glucosidic linkages in starch by scission of a 1,4-alpha-linked oligosaccharide from growing alpha-1,4-glucan chains and the subsequent attachment of the oligosaccharide to the alpha-1,6 position. The sequence is that of 1,4-alpha-glucan-branching enzyme, chloroplastic/amyloplastic (SBE1) from Oryza sativa subsp. japonica (Rice).